An 89-amino-acid chain; its full sequence is Small ribosomal subunit protein uS15 (89 aa).

Belongs to the universal ribosomal protein uS15 family. In terms of assembly, part of the 30S ribosomal subunit. Forms a bridge to the 50S subunit in the 70S ribosome, contacting the 23S rRNA.

Its function is as follows. One of the primary rRNA binding proteins, it binds directly to 16S rRNA where it helps nucleate assembly of the platform of the 30S subunit by binding and bridging several RNA helices of the 16S rRNA. Forms an intersubunit bridge (bridge B4) with the 23S rRNA of the 50S subunit in the ribosome. The chain is Small ribosomal subunit protein uS15 from Zymomonas mobilis subsp. mobilis (strain ATCC 31821 / ZM4 / CP4).